Reading from the N-terminus, the 1006-residue chain is Unconventional myosin-Id (1006 aa).

Alanine 2 bears the N-acetylalanine mark. The region spanning 9-695 (FGKADFVLMD…TLFTLEELRA (687 aa)) is the Myosin motor domain. 102–109 (GESGAGKT) contributes to the ATP binding site. Serine 200 is subject to Phosphoserine. Position 536 is a phosphotyrosine (tyrosine 536). Positions 572–594 (MIALVDNLASKEPYYVRCIKPND) are actin-binding. IQ domains follow at residues 699–719 (VRVV…MRYK) and 721–741 (TKAA…SYIH). The interaction with calmodulin stretch occupies residues 776 to 896 (LQSIFNRWRA…MDPTKQYKVM (121 aa)). The region spanning 812–1005 (GQRADLGLQR…RSGFILSVPG (194 aa)) is the TH1 domain.

Belongs to the TRAFAC class myosin-kinesin ATPase superfamily. Myosin family. In terms of assembly, interacts (via the two IQ motifs) with calmodulin. Binds an additional calmodulin chain via a third, C-terminal region. Interacts with F-actin. In terms of tissue distribution, detected on tracheal epithelial cells, and on epithelial cells and brush border cells in duodenum, jejunum and ileum. Detected on myelinated white matter in the cerebellum, and the myelinated part of the optic nerve. Detected on mature oligodendrocites. Detected on the outside of the myelin sheet that surrounds axons (at protein level). Ubiquitous. Highest levels in adult brain, and spinal cord. Moderate levels in lung, kidney, liver and spleen. Low levels in testis and heart (at protein level).

Its subcellular location is the cytoplasm. It is found in the perikaryon. The protein resides in the cell projection. It localises to the dendrite. The protein localises to the early endosome. Its subcellular location is the cell cortex. In terms of biological role, unconventional myosin that functions as actin-based motor protein with ATPase activity. Plays a role in endosomal protein trafficking, and especially in the transfer of cargo proteins from early to recycling endosomes. Required for normal planar cell polarity in ciliated tracheal cells, for normal rotational polarity of cilia, and for coordinated, unidirectional ciliary movement in the trachea. Required for normal, polarized cilia organization in brain ependymal epithelial cells. The sequence is that of Unconventional myosin-Id (Myo1d) from Rattus norvegicus (Rat).